A 616-amino-acid chain; its full sequence is Chaperone protein HscA (616 aa).

This sequence belongs to the heat shock protein 70 family.

Functionally, chaperone involved in the maturation of iron-sulfur cluster-containing proteins. Has a low intrinsic ATPase activity which is markedly stimulated by HscB. Involved in the maturation of IscU. The chain is Chaperone protein HscA from Salmonella heidelberg (strain SL476).